Here is a 219-residue protein sequence, read N- to C-terminus: Histone H1.4 (219 aa).

A compositionally biased stretch (low complexity) spans Met1–Ala15. A disordered region spans residues Met1–Ser41. Ser2 is subject to N-acetylserine. Ser2 is subject to Phosphoserine. Lys17 bears the N6-acetyllysine mark. Residue Thr18 is modified to Phosphothreonine. Basic residues predominate over residues Val20–Thr35. Lys26 bears the N6-acetyllysine; alternate mark. The residue at position 26 (Lys26) is an N6-methyllysine; alternate. Lys34 carries the post-translational modification N6-(beta-hydroxybutyryl)lysine; alternate. Lys34 carries the N6-succinyllysine; alternate modification. Residue Ser36 is modified to Phosphoserine. The 74-residue stretch at Ser36 to Lys109 folds into the H15 domain. At Lys52 the chain carries N6-(beta-hydroxybutyryl)lysine. Position 54 is a citrulline (Arg54). Residues Lys64, Lys85, Lys90, and Lys106 each carry the N6-(beta-hydroxybutyryl)lysine modification. Positions Thr92–Lys219 are disordered. The segment covering Lys119–Lys140 has biased composition (basic residues). Phosphothreonine is present on Thr146. 2 stretches are compositionally biased toward basic residues: residues Lys149–Lys160 and Lys168–Pro185. An ADP-ribosylserine modification is found at Ser150. Ser187 is subject to Phosphoserine. The segment covering Lys192–Lys219 has biased composition (basic residues).

The protein belongs to the histone H1/H5 family. In terms of processing, citrullination at Arg-54 (H1R54ci) by PADI4 takes place within the DNA-binding site of H1 and results in its displacement from chromatin and global chromatin decondensation, thereby promoting pluripotency and stem cell maintenance. ADP-ribosylated on Ser-55, Ser-113 and Ser-150 in response to DNA damage. Post-translationally, H1 histones are progressively phosphorylated during the cell cycle, becoming maximally phosphorylated during late G2 phase and M phase, and being dephosphorylated sharply thereafter. In terms of processing, acetylated at Lys-26. Deacetylated at Lys-26 by SIRT1. Hydroxybutyrylation of histones is induced by starvation.

It is found in the nucleus. The protein localises to the chromosome. Histone H1 protein binds to linker DNA between nucleosomes forming the macromolecular structure known as the chromatin fiber. Histones H1 are necessary for the condensation of nucleosome chains into higher-order structured fibers. Also acts as a regulator of individual gene transcription through chromatin remodeling, nucleosome spacing and DNA methylation. In Mus musculus (Mouse), this protein is Histone H1.4.